A 197-amino-acid chain; its full sequence is ADP-ribosylation factor 1 (197 aa).

A lipid anchor (N-myristoyl glycine) is attached at Gly2. GTP is bound by residues 24-31 (GLDAAGKT), 67-71 (DVGGQ), and 126-129 (NKQD).

The protein belongs to the small GTPase superfamily. Arf family.

It is found in the golgi apparatus. It carries out the reaction GTP + H2O = GDP + phosphate + H(+). In terms of biological role, GTP-binding protein involved in protein trafficking; may modulate vesicle budding and uncoating within the Golgi apparatus. This Solanum tuberosum (Potato) protein is ADP-ribosylation factor 1.